We begin with the raw amino-acid sequence, 368 residues long: tRNA-specific 2-thiouridylase MnmA (368 aa).

ATP is bound by residues 12–19 and Met38; that span reads GMSGGVDS. Positions 98–100 are interaction with target base in tRNA; it reads NPD. Cys103 serves as the catalytic Nucleophile. Cys103 and Cys200 are joined by a disulfide. An ATP-binding site is contributed by Gly128. An interaction with tRNA region spans residues 150–152; that stretch reads KDQ. Cys200 (cysteine persulfide intermediate) is an active-site residue. The interval 313-314 is interaction with tRNA; the sequence is RY.

The protein belongs to the MnmA/TRMU family. Interacts with TusE.

It is found in the cytoplasm. The catalysed reaction is S-sulfanyl-L-cysteinyl-[protein] + uridine(34) in tRNA + AH2 + ATP = 2-thiouridine(34) in tRNA + L-cysteinyl-[protein] + A + AMP + diphosphate + H(+). In terms of biological role, catalyzes the 2-thiolation of uridine at the wobble position (U34) of tRNA(Lys), tRNA(Glu) and tRNA(Gln), leading to the formation of s(2)U34, the first step of tRNA-mnm(5)s(2)U34 synthesis. Sulfur is provided by IscS, via a sulfur-relay system. Binds ATP and its substrate tRNAs. The polypeptide is tRNA-specific 2-thiouridylase MnmA (Pectobacterium carotovorum subsp. carotovorum (strain PC1)).